The chain runs to 117 residues: MIVELYSNIIEVRRYTTKDSLCSIFESGSTSHFEINQLQVKRLNLLQNQFASVFTSFHPKDNTKGIHINFFSPVTRITDLQYSFFYTNQILFGTRYLIKMIQNFVTGKVFTRTNQSK.

This is an uncharacterized protein from Saccharomyces cerevisiae (strain ATCC 204508 / S288c) (Baker's yeast).